The following is a 229-amino-acid chain: Large ribosomal subunit protein uL1 (229 aa).

This sequence belongs to the universal ribosomal protein uL1 family. As to quaternary structure, part of the 50S ribosomal subunit.

In terms of biological role, binds directly to 23S rRNA. The L1 stalk is quite mobile in the ribosome, and is involved in E site tRNA release. Its function is as follows. Protein L1 is also a translational repressor protein, it controls the translation of the L11 operon by binding to its mRNA. The polypeptide is Large ribosomal subunit protein uL1 (Streptococcus sanguinis (strain SK36)).